The primary structure comprises 412 residues: Lipoyl synthase, mitochondrial (412 aa).

The [4Fe-4S] cluster site is built by C127, C132, C138, C159, C163, C166, and S375. Residues S142–L364 enclose the Radical SAM core domain.

It belongs to the radical SAM superfamily. Lipoyl synthase family. [4Fe-4S] cluster serves as cofactor.

The protein resides in the mitochondrion. It catalyses the reaction [[Fe-S] cluster scaffold protein carrying a second [4Fe-4S](2+) cluster] + N(6)-octanoyl-L-lysyl-[protein] + 2 oxidized [2Fe-2S]-[ferredoxin] + 2 S-adenosyl-L-methionine + 4 H(+) = [[Fe-S] cluster scaffold protein] + N(6)-[(R)-dihydrolipoyl]-L-lysyl-[protein] + 4 Fe(3+) + 2 hydrogen sulfide + 2 5'-deoxyadenosine + 2 L-methionine + 2 reduced [2Fe-2S]-[ferredoxin]. It functions in the pathway protein modification; protein lipoylation via endogenous pathway; protein N(6)-(lipoyl)lysine from octanoyl-[acyl-carrier-protein]: step 2/2. Catalyzes the radical-mediated insertion of two sulfur atoms into the C-6 and C-8 positions of the octanoyl moiety bound to the lipoyl domains of lipoate-dependent enzymes, thereby converting the octanoylated domains into lipoylated derivatives. The sequence is that of Lipoyl synthase, mitochondrial from Leishmania infantum.